A 91-amino-acid chain; its full sequence is Small ribosomal subunit protein bS18 (91 aa).

Belongs to the bacterial ribosomal protein bS18 family. As to quaternary structure, part of the 30S ribosomal subunit. Forms a tight heterodimer with protein bS6.

Its function is as follows. Binds as a heterodimer with protein bS6 to the central domain of the 16S rRNA, where it helps stabilize the platform of the 30S subunit. In Burkholderia lata (strain ATCC 17760 / DSM 23089 / LMG 22485 / NCIMB 9086 / R18194 / 383), this protein is Small ribosomal subunit protein bS18.